Here is a 343-residue protein sequence, read N- to C-terminus: Uroporphyrinogen decarboxylase (343 aa).

Residues 23 to 27, aspartate 73, tyrosine 149, threonine 204, and histidine 320 each bind substrate; that span reads RQAGR.

The protein belongs to the uroporphyrinogen decarboxylase family. As to quaternary structure, homodimer.

The protein resides in the cytoplasm. It carries out the reaction uroporphyrinogen III + 4 H(+) = coproporphyrinogen III + 4 CO2. Its pathway is porphyrin-containing compound metabolism; protoporphyrin-IX biosynthesis; coproporphyrinogen-III from 5-aminolevulinate: step 4/4. Catalyzes the decarboxylation of four acetate groups of uroporphyrinogen-III to yield coproporphyrinogen-III. This Bradyrhizobium sp. (strain BTAi1 / ATCC BAA-1182) protein is Uroporphyrinogen decarboxylase.